The primary structure comprises 495 residues: UDP-N-acetylmuramoyl-L-alanyl-D-glutamate--2,6-diaminopimelate ligase (495 aa).

Residues Leu-27, Ser-29, and 44-46 (HQA) contribute to the UDP-N-acetyl-alpha-D-muramoyl-L-alanyl-D-glutamate site. Position 116–122 (116–122 (GTNGKTT)) interacts with ATP. UDP-N-acetyl-alpha-D-muramoyl-L-alanyl-D-glutamate-binding positions include Asn-157, 158–159 (TT), Ser-185, Gln-191, and Arg-193. Residue Lys-225 is modified to N6-carboxylysine. Residues Arg-390, 414–417 (DNPR), Gly-465, and Glu-469 contribute to the meso-2,6-diaminopimelate site. The Meso-diaminopimelate recognition motif motif lies at 414 to 417 (DNPR).

It belongs to the MurCDEF family. MurE subfamily. Mg(2+) is required as a cofactor. Carboxylation is probably crucial for Mg(2+) binding and, consequently, for the gamma-phosphate positioning of ATP.

It localises to the cytoplasm. It catalyses the reaction UDP-N-acetyl-alpha-D-muramoyl-L-alanyl-D-glutamate + meso-2,6-diaminopimelate + ATP = UDP-N-acetyl-alpha-D-muramoyl-L-alanyl-gamma-D-glutamyl-meso-2,6-diaminopimelate + ADP + phosphate + H(+). Its pathway is cell wall biogenesis; peptidoglycan biosynthesis. Catalyzes the addition of meso-diaminopimelic acid to the nucleotide precursor UDP-N-acetylmuramoyl-L-alanyl-D-glutamate (UMAG) in the biosynthesis of bacterial cell-wall peptidoglycan. The sequence is that of UDP-N-acetylmuramoyl-L-alanyl-D-glutamate--2,6-diaminopimelate ligase from Escherichia coli O6:H1 (strain CFT073 / ATCC 700928 / UPEC).